A 212-amino-acid chain; its full sequence is ATP-dependent Clp protease proteolytic subunit (212 aa).

Catalysis depends on S106, which acts as the Nucleophile. The active site involves H131.

It belongs to the peptidase S14 family. Fourteen ClpP subunits assemble into 2 heptameric rings which stack back to back to give a disk-like structure with a central cavity, resembling the structure of eukaryotic proteasomes.

The protein localises to the cytoplasm. The enzyme catalyses Hydrolysis of proteins to small peptides in the presence of ATP and magnesium. alpha-casein is the usual test substrate. In the absence of ATP, only oligopeptides shorter than five residues are hydrolyzed (such as succinyl-Leu-Tyr-|-NHMec, and Leu-Tyr-Leu-|-Tyr-Trp, in which cleavage of the -Tyr-|-Leu- and -Tyr-|-Trp bonds also occurs).. Functionally, cleaves peptides in various proteins in a process that requires ATP hydrolysis. Has a chymotrypsin-like activity. Plays a major role in the degradation of misfolded proteins. In Rhodopseudomonas palustris (strain ATCC BAA-98 / CGA009), this protein is ATP-dependent Clp protease proteolytic subunit.